The primary structure comprises 310 residues: Homoserine kinase (310 aa).

ATP is bound at residue 91–101 (PIGSGLGSSAC).

It belongs to the GHMP kinase family. Homoserine kinase subfamily.

It is found in the cytoplasm. The catalysed reaction is L-homoserine + ATP = O-phospho-L-homoserine + ADP + H(+). The protein operates within amino-acid biosynthesis; L-threonine biosynthesis; L-threonine from L-aspartate: step 4/5. Its function is as follows. Catalyzes the ATP-dependent phosphorylation of L-homoserine to L-homoserine phosphate. This chain is Homoserine kinase, found in Escherichia coli O139:H28 (strain E24377A / ETEC).